We begin with the raw amino-acid sequence, 601 residues long: Potassium voltage-gated channel subfamily A member 5 (601 aa).

The interval methionine 1 to glutamate 200 is tetramerization domain. The Cytoplasmic portion of the chain corresponds to methionine 1 to glycine 236. A disordered region spans residues glycine 19–leucine 93. Positions arginine 65–proline 74 are enriched in pro residues. Lysine 210 participates in a covalent cross-link: Glycyl lysine isopeptide (Lys-Gly) (interchain with G-Cter in SUMO). The chain crosses the membrane as a helical span at residues serine 237–leucine 258. At glutamate 259 to proline 312 the chain is on the extracellular side. The tract at residues proline 275 to serine 297 is disordered. Asparagine 288 carries N-linked (GlcNAc...) asparagine glycosylation. Residues phenylalanine 313–alanine 334 form a helical membrane-spanning segment. Cysteine 335 carries S-palmitoyl cysteine lipidation. Residues cysteine 335–isoleucine 345 lie on the Cytoplasmic side of the membrane. A helical membrane pass occupies residues methionine 346–alanine 366. Over glutamate 367–serine 383 the chain is Extracellular. The chain crosses the membrane as a helical; Voltage-sensor span at residues leucine 384–histidine 404. The Cytoplasmic portion of the chain corresponds to serine 405–methionine 419. The tract at residues lysine 406–methionine 419 is S4-S5 linker. The helical transmembrane segment at arginine 420 to tyrosine 441 threads the bilayer. At phenylalanine 442–isoleucine 455 the chain is on the extracellular side. The helical intramembrane region spans proline 456–threonine 467. The Selectivity filter motif lies at threonine 468–aspartate 473. An intramembrane segment occupies threonine 468 to arginine 475. The Extracellular segment spans residues proline 476 to lysine 482. A helical membrane pass occupies residues isoleucine 483–tyrosine 511. At histidine 512 to leucine 601 the chain is on the cytoplasmic side. Residues alanine 521–serine 545 are disordered. Residue lysine 524 forms a Glycyl lysine isopeptide (Lys-Gly) (interchain with G-Cter in SUMO) linkage. The PDZ-binding signature appears at threonine 599–leucine 601.

This sequence belongs to the potassium channel family. A (Shaker) (TC 1.A.1.2) subfamily. Kv1.5/KCNA5 sub-subfamily. As to quaternary structure, homotetramer and heterotetramer of potassium channel proteins. Interacts with DLG1, which enhances channel currents. Forms a ternary complex with DLG1 and CAV3. Interacts with KCNAB1. Interacts with UBE2I. Interacts with XIRP2; the interaction is required for normal action potential configuration in the heart. In terms of processing, glycosylated. Post-translationally, sumoylated on Lys-210, and Lys-524, preferentially with SUMO3. Sumoylation regulates the voltage sensitivity of the channel.

Its subcellular location is the cell membrane. It carries out the reaction K(+)(in) = K(+)(out). Voltage-gated potassium channel that mediates transmembrane potassium transport in excitable membranes. Forms tetrameric potassium-selective channels through which potassium ions pass in accordance with their electrochemical gradient. The channel alternates between opened and closed conformations in response to the voltage difference across the membrane. Can form functional homotetrameric channels and heterotetrameric channels that contain variable proportions of KCNA1, KCNA2, KCNA4, KCNA5, and possibly other family members as well; channel properties depend on the type of alpha subunits that are part of the channel. Channel properties are modulated by cytoplasmic beta subunits that regulate the subcellular location of the alpha subunits and promote rapid inactivation. Homotetrameric channels display rapid activation and slow inactivation. Required for normal electrical conduction including formation of the infranodal ventricular conduction system and normal action potential configuration, as a result of its interaction with XIRP2. May play a role in regulating the secretion of insulin in normal pancreatic islets. This is Potassium voltage-gated channel subfamily A member 5 (KCNA5) from Mustela putorius furo (European domestic ferret).